Consider the following 98-residue polypeptide: Small ribosomal subunit protein eS24 (98 aa).

Belongs to the eukaryotic ribosomal protein eS24 family. Part of the 30S ribosomal subunit.

The polypeptide is Small ribosomal subunit protein eS24 (Thermococcus kodakarensis (strain ATCC BAA-918 / JCM 12380 / KOD1) (Pyrococcus kodakaraensis (strain KOD1))).